A 360-amino-acid chain; its full sequence is Arginase, non-hepatic 1 (360 aa).

Positions 122, 145, 147, and 149 each coordinate Mn(2+). Substrate-binding positions include 147–151 (HADIN), 158–160 (SGN), and aspartate 204. 2 residues coordinate Mn(2+): aspartate 253 and aspartate 255. 2 residues coordinate substrate: threonine 267 and glutamate 298.

Belongs to the arginase family. Homotrimer. It depends on Mn(2+) as a cofactor. As to expression, expressed at differing tadpole stages in tail, intestine, hindlimb and trunk region. Most abundant in tadpole tail.

The enzyme catalyses L-arginine + H2O = urea + L-ornithine. It functions in the pathway nitrogen metabolism; urea cycle; L-ornithine and urea from L-arginine: step 1/1. As well as its role in the urea cycle, may be involved in tissue remodeling. The polypeptide is Arginase, non-hepatic 1 (arg2-a) (Xenopus laevis (African clawed frog)).